The sequence spans 1166 residues: Poly [ADP-ribose] polymerase tankyrase-2 (1166 aa).

ANK repeat units follow at residues 23–52 (PSARELFEACRNGDVERVKRLVTPEKVNSR), 57–86 (RKSTPLHFAAGFGRKDVVEYLLQNGANVQA), 90–119 (GGLIPLHNACSFGHAEVVNLLLQHGADPNA), and 123–152 (WNYTPLHEAAIKGKIDVCIVLLQHGAEPTI). (3S)-3-hydroxyasparagine; by HIF1AN is present on Asn203. ANK repeat units lie at residues 210 to 239 (RKSTPLHLAAGYNRVKIVQLLLHHGADVHA), 243 to 272 (GDLVPLHNACSYGHYEVTELLVKHGACVNA), 276 to 305 (WQFTPLHEAASKNRIEVCSLLLSYGADPTL), 363 to 395 (THETALHCAAASPYPKRKQICELLLRKGANTNE), 399 to 428 (EFLTPLHVASENAHNDVVEVVVKHEAKVNA), 432 to 461 (LGQTSLHRAAHCGHLQTCRLLLSYGCDPNI), and 463 to 489 (SLQGFTALQMGNENVQQLLQEGASLGH). His238 carries the post-translational modification (3S)-3-hydroxyhistidine; by HIF1AN. Asn271 bears the (3S)-3-hydroxyasparagine; by HIF1AN mark. Asn427 carries the post-translational modification (3S)-3-hydroxyasparagine; by HIF1AN. Asn518 is modified ((3S)-3-hydroxyasparagine; by HIF1AN). 4 ANK repeats span residues 525–554 (RQSTPLHFAAGYNRVSVVEYLLQHGADVHA), 558–587 (GGLVPLHNACSYGHYEVAELLVKHGAVVNV), 591–620 (WKFTPLHEAAAKGKYEICKLLLQHGADPTK), and 624–652 (DGNTPLDLVKDGDTDIQDLLRGDAALLDA). An HIF1AN-binding region spans residues 545 to 553 (LLQHGADVH). Residue His553 is modified to (3S)-3-hydroxyhistidine; by HIF1AN. Asn586 bears the (3S)-3-hydroxyasparagine; by HIF1AN mark. 3 positions are modified to (3S)-3-hydroxyasparagine; by HIF1AN: Asn671, Asn706, and Asn739. ANK repeat units lie at residues 678 to 707 (RHSTPLHLAAGYNNLEVAEYLLQHGADVNA), 711 to 740 (GGLIPLHNAASYGHVDVAALLIKYNACVNA), and 744 to 773 (WAFTPLHEAAQKGRTQLCALLLAHGADPTL). The 64-residue stretch at 873–936 (GIDFSITQFI…IKGVERLISG (64 aa)) folds into the SAM domain. In terms of domain architecture, PARP catalytic spans 959–1164 (SPDDKEFQSV…YQIVRPEGMV (206 aa)). Zn(2+) is bound by residues Cys1081, His1084, Cys1089, and Cys1092.

It belongs to the ARTD/PARP family. As to quaternary structure, oligomerizes and associates with TNKS. Interacts with the cytoplasmic domain of LNPEP/Otase in SLC2A4/GLUT4-vesicles. Binds to the N-terminus of Grb14 and TRF1 with its ankyrin repeat region. Interacts with HIF1AN. Interacts with RNF146; this interaction leads to ubiquitination and proteasomal degradation. Interacts with NUMA1. Post-translationally, ubiquitinated by RNF146 when auto-poly-ADP-ribosylated, leading to its degradation. Deubiquitinated by USP25; leading to stabilization. ADP-ribosylated (-auto). Poly-ADP-ribosylated protein is recognized by RNF146, followed by ubiquitination.

The protein localises to the cytoplasm. It localises to the golgi apparatus membrane. The protein resides in the nucleus. It is found in the chromosome. Its subcellular location is the telomere. The enzyme catalyses NAD(+) + (ADP-D-ribosyl)n-acceptor = nicotinamide + (ADP-D-ribosyl)n+1-acceptor + H(+).. The catalysed reaction is L-aspartyl-[protein] + NAD(+) = 4-O-(ADP-D-ribosyl)-L-aspartyl-[protein] + nicotinamide. It carries out the reaction L-glutamyl-[protein] + NAD(+) = 5-O-(ADP-D-ribosyl)-L-glutamyl-[protein] + nicotinamide. In terms of biological role, poly-ADP-ribosyltransferase involved in various processes such as Wnt signaling pathway, telomere length and vesicle trafficking. Acts as an activator of the Wnt signaling pathway by mediating poly-ADP-ribosylation of AXIN1 and AXIN2, 2 key components of the beta-catenin destruction complex: poly-ADP-ribosylated target proteins are recognized by RNF146, which mediates their ubiquitination and subsequent degradation. Also mediates poly-ADP-ribosylation of BLZF1 and CASC3, followed by recruitment of RNF146 and subsequent ubiquitination. Mediates poly-ADP-ribosylation of TERF1, thereby contributing to the regulation of telomere length. Stimulates 26S proteasome activity. This Mus musculus (Mouse) protein is Poly [ADP-ribose] polymerase tankyrase-2.